We begin with the raw amino-acid sequence, 142 residues long: Small ribosomal subunit protein uS12 (142 aa).

Residues 1 to 30 (MGKTRGMGAARKLKNHRRRQRWADKSYKKS) form a disordered region. Over residues 11-20 (RKLKNHRRRQ) the composition is skewed to basic residues. The span at 21–30 (RWADKSYKKS) shows a compositional bias: basic and acidic residues. P61 is subject to Hydroxyproline.

The protein belongs to the universal ribosomal protein uS12 family.

This chain is Small ribosomal subunit protein uS12 (RPS23), found in Fragaria ananassa (Strawberry).